A 316-amino-acid chain; its full sequence is Taste receptor type 2 member 3 (316 aa).

At 1–7 (MFGFIEG) the chain is on the extracellular side. Residues 8–28 (VFLVLTITEFILGNLVNGFIV) form a helical membrane-spanning segment. At 29–50 (SINSSYWFKSKKISLSNFIITS) the chain is on the cytoplasmic side. A helical membrane pass occupies residues 51 to 71 (LALFRIFLLWIIFIDSLIIVF). At 72–86 (SYQTHDSGIMMQLID) the chain is on the extracellular side. A helical transmembrane segment spans residues 87 to 107 (VFWTFTNHFSIWLISCLSVFY). Topologically, residues 108–128 (CLKIASFSHPSFLWLKWRASR) are cytoplasmic. Residues 129–149 (VVVGMLWGALLLSCVSTMSLM) form a helical membrane-spanning segment. Residues 150–186 (NEFKIYSALTRSKDTPNMTEYIRLKRQEYNLMHVLGN) lie on the Extracellular side of the membrane. The N-linked (GlcNAc...) asparagine glycan is linked to Asn166. Residues 187–207 (LWKIPSLIVSLVAYLLLLLSL) form a helical membrane-spanning segment. The Cytoplasmic portion of the chain corresponds to 208–234 (GKHTQQMQQYSIDSRDQSAEAHKRAMR). The chain crosses the membrane as a helical span at residues 235–255 (IISSFLLFFLFYFLSFMILSS). At 256 to 266 (SRFLPETRIAR) the chain is on the extracellular side. Residues 267 to 287 (IIGVVISMSYLVGDSFILIVC) traverse the membrane as a helical segment. The Cytoplasmic segment spans residues 288–316 (NNKLKHTFVAMLPCECGHLKPGSKGPSAS).

Belongs to the G-protein coupled receptor T2R family.

The protein localises to the membrane. Functionally, gustducin-coupled receptor implicated in the perception of bitter compounds in the oral cavity and the gastrointestinal tract. Signals through PLCB2 and the calcium-regulated cation channel TRPM5. The polypeptide is Taste receptor type 2 member 3 (Tas2r3) (Mus musculus (Mouse)).